The chain runs to 170 residues: Adenine phosphoribosyltransferase (170 aa).

This sequence belongs to the purine/pyrimidine phosphoribosyltransferase family. Homodimer.

The protein resides in the cytoplasm. The catalysed reaction is AMP + diphosphate = 5-phospho-alpha-D-ribose 1-diphosphate + adenine. The protein operates within purine metabolism; AMP biosynthesis via salvage pathway; AMP from adenine: step 1/1. Catalyzes a salvage reaction resulting in the formation of AMP, that is energically less costly than de novo synthesis. This chain is Adenine phosphoribosyltransferase, found in Bacillus cereus (strain G9842).